The sequence spans 85 residues: Depressant scorpion toxin BmKIM (85 aa).

An N-terminal signal peptide occupies residues 1-21; that stretch reads MKLFLLLVFFASMLIDGLVNA. One can recognise an LCN-type CS-alpha/beta domain in the interval 22-82; it reads DGYIRGSNGC…TWKSESNTCG (61 aa). 4 disulfide bridges follow: Cys-31–Cys-81, Cys-35–Cys-56, Cys-42–Cys-63, and Cys-46–Cys-65. Glycine amide is present on Gly-82.

This sequence belongs to the long (4 C-C) scorpion toxin superfamily. Sodium channel inhibitor family. As to expression, expressed by the venom gland.

The protein localises to the secreted. Functionally, causes a slow progressive depressant flaccid paralysis, when injected into S.falculata blowfly larvae. Inhibits dose-dependently the total sodium (Nav) currents both in dorsal root ganglia neurons and in ventricular myocytes. Is toxic to mice by intravenous injection, but not by subcutaneous or intracerebroventricular injection. Produces antiarrhythmia in rat. Is then active on both mammals and insects. The chain is Depressant scorpion toxin BmKIM (KIM2) from Olivierus martensii (Manchurian scorpion).